A 108-amino-acid chain; its full sequence is Iron-sulfur cluster assembly protein CyaY (108 aa).

This sequence belongs to the frataxin family.

Its function is as follows. Involved in iron-sulfur (Fe-S) cluster assembly. May act as a regulator of Fe-S biogenesis. The polypeptide is Iron-sulfur cluster assembly protein CyaY (Burkholderia ambifaria (strain MC40-6)).